Consider the following 837-residue polypeptide: MFNLIVSKLFGSRNERFIKKLKPQIDQIAALEPEMEKLTDEQFPQKIAEYKEQVAAGTSLDDILVEVFALVREAGKRSLEMRHYDVQMVGGMVLHSGRIAEMKTGEGKTLVATLPAVLNALSGKGVHLITVNDYLAKRDAEWMGKLYNFLGLTVGVVVHGLSDEERQEAYGCDITYGTNNEFGFDYLRDNMKFYKEQLVQRELNYCIVDEVDSILIDEARTPLIISGASEDATSMYGRVNSMIPLLKRDEDFEVDEKGRSITMTDDGVMKCEQILGIDNLYDSQHISFQHHIMQGIKAHHLFSRDVDYIVKDGQVVIVDEFTGRLMPGRRFSDGLHQALEAKEGVKVESENQTLASITFQNYFRMYNKLAGMTGTADTESVEFAQIYDLEVIVIPTNTAMIRKDFPDSIYKTQQEKYNAIADDIAAKYKKGQPVLVGTVSIEKSELVSSLLKKRKIPHNVLNAKHHQQEAEIVAEAGHKGHVTIATNMAGRGTDIKLGEGVLEIGGLHIIGTERHESRRIDNQLRGRSGRQGDPGSTRFYLALDDDLMRLFGSDRIAGIMDKLGMEEGEPIENGMVTKAIENSQKKVEGHNFEIRKQLLDYDNVMNQQREVIYTLRRDVMYSEDMNEMTAEFVEELFDDAFYAVEEAKGKPLDAETEEMVRVRLDELFGINRNEEFKEALPTREQAEEWVSEILDTLKESAGDHYHEIQRYFLLEALDRNWKEHLLNMDHLREGIGLRGYGQKDPKHEYKREGFELFREMLGRIKENTVRALCHLRIETEVREDEFQHKESKSDLEYSDSENTETKKKPKRRSEPKVGRNDPCPCGSGKKYKKCCGK.

ATP is bound by residues Gln-87, 105 to 109 (GEGKT), and Asp-494. Residues 788 to 837 (HKESKSDLEYSDSENTETKKKPKRRSEPKVGRNDPCPCGSGKKYKKCCGK) form a disordered region. Cys-823, Cys-825, Cys-834, and Cys-835 together coordinate Zn(2+).

This sequence belongs to the SecA family. As to quaternary structure, monomer and homodimer. Part of the essential Sec protein translocation apparatus which comprises SecA, SecYEG and auxiliary proteins SecDF-YajC and YidC. Requires Zn(2+) as cofactor.

The protein resides in the cell inner membrane. The protein localises to the cytoplasm. The catalysed reaction is ATP + H2O + cellular proteinSide 1 = ADP + phosphate + cellular proteinSide 2.. Part of the Sec protein translocase complex. Interacts with the SecYEG preprotein conducting channel. Has a central role in coupling the hydrolysis of ATP to the transfer of proteins into and across the cell membrane, serving as an ATP-driven molecular motor driving the stepwise translocation of polypeptide chains across the membrane. This chain is Protein translocase subunit SecA, found in Maridesulfovibrio salexigens (strain ATCC 14822 / DSM 2638 / NCIMB 8403 / VKM B-1763) (Desulfovibrio salexigens).